We begin with the raw amino-acid sequence, 528 residues long: Probable histone-arginine methyltransferase CARM1 (528 aa).

The region spanning E149–S464 is the SAM-dependent MTase PRMT-type domain. Q166, R175, G199, E221, E251, and S279 together coordinate S-adenosyl-L-methionine. Residues Y500 to L520 are compositionally biased toward low complexity. The tract at residues Y500 to D528 is disordered.

The protein belongs to the class I-like SAM-binding methyltransferase superfamily. Protein arginine N-methyltransferase family.

It is found in the nucleus. Its subcellular location is the cytoplasm. The enzyme catalyses L-arginyl-[protein] + 2 S-adenosyl-L-methionine = N(omega),N(omega)-dimethyl-L-arginyl-[protein] + 2 S-adenosyl-L-homocysteine + 2 H(+). In terms of biological role, methylates (mono- and asymmetric dimethylation) the guanidino nitrogens of arginyl residues in several proteins involved in DNA packaging, transcription regulation, and mRNA stability. Recruited to promoters upon gene activation, methylates histone H3 and activates transcription via chromatin remodeling. The polypeptide is Probable histone-arginine methyltransferase CARM1 (CARM1) (Oryza sativa subsp. indica (Rice)).